The primary structure comprises 384 residues: MFSRKQVQKRNNELSSLHCSNSSNSLNRIHKNEETAKGTVGVNARGNNRSDNVASPGQLRPRTSSILTDNSEWILFSPENAEGEYVITSSDGIRRTNSNHYYYNYNEDDILSSSRRSSEDVYDAEQEYTEQPVNNHVQVEDEEDDDSIINDLTHVVDDYDYEEEDDKQDLTTRIDNWRKKQVSELLNELNHDDDLDPVLNRDKIDLIQSWGIENEKLNTKPRAKKRQRKSKRASFYGQDLLSKYSMEDLKIIKQIVAQLRDDLDKVKHDKPSSPLPNYHNTLKQAPSSNSQNPSFISYYSNYLTKNNSQQTPNSQSTSGSLLNNPNLEKYLPLFLKNLLYEDSNGSHQHPETSEKEHFWDNDLKSVNSSILTLSSNSKLKQEIL.

Residues Met-1–Thr-63 form a disordered region. A compositionally biased stretch (low complexity) spans Glu-13–Asn-27. Residues Arg-45–Thr-63 show a composition bias toward polar residues. Ser-112 carries the phosphoserine modification. The segment at Val-266–Gln-291 is disordered. The span at Tyr-278–Gln-291 shows a compositional bias: polar residues.

In terms of assembly, interacts with ATG11, ATG17, ATG37, PEX3 and PEX14. In terms of processing, phosphorylation at Ser-112 is required for micro- and macropexophagy.

It localises to the vacuole lumen. The protein localises to the preautophagosomal structure. The protein resides in the peroxisome membrane. Acts as the peroxisome receptor for pexophagy. Required for both micropexophagy and macropexophagy, but not for the cytoplasm to vacuole transport (Cvt) or autophagy pathways. Required for functional micropexophagic apparatus (MIPA) and relocation of ATG11 to the peroxisome-sequestering arms of the vacuole. The sequence is that of Autophagy-related protein 30 (ATG30) from Komagataella phaffii (strain GS115 / ATCC 20864) (Yeast).